The following is a 47-amino-acid chain: PhoP/PhoQ regulator MgrB (47 aa).

The chain crosses the membrane as a helical span at residues 6–26 (WAILLAVLVACLLLWMQTLNV).

The protein belongs to the MgrB family. As to quaternary structure, may form homooligomers. Probably interacts with the periplasmic domain of PhoQ.

It localises to the cell inner membrane. In terms of biological role, phoP-regulated transcription is redox-sensitive, being activated when the periplasm becomes more reducing. MgrB acts between DsbA/DsbB and PhoP/PhoQ in this pathway. Represses PhoP/PhoQ signaling, possibly by binding to the periplasmic domain of PhoQ, altering its activity and that of downstream effector PhoP. This is PhoP/PhoQ regulator MgrB from Cronobacter sakazakii (strain ATCC BAA-894) (Enterobacter sakazakii).